The chain runs to 174 residues: ATP synthase subunit delta, sodium ion specific (174 aa).

Belongs to the ATPase delta chain family. As to quaternary structure, F-type ATPases have 2 components, F(1) - the catalytic core - and F(0) - the membrane proton channel. F(1) has five subunits: alpha(3), beta(3), gamma(1), delta(1), epsilon(1). F(0) has three main subunits: a(1), b(2) and c(10-14). The alpha and beta chains form an alternating ring which encloses part of the gamma chain. F(1) is attached to F(0) by a central stalk formed by the gamma and epsilon chains, while a peripheral stalk is formed by the delta and b chains.

It localises to the cell inner membrane. F(1)F(0) ATP synthase produces ATP from ADP in the presence of a proton or sodium gradient. F-type ATPases consist of two structural domains, F(1) containing the extramembraneous catalytic core and F(0) containing the membrane proton channel, linked together by a central stalk and a peripheral stalk. During catalysis, ATP synthesis in the catalytic domain of F(1) is coupled via a rotary mechanism of the central stalk subunits to proton translocation. In terms of biological role, this protein is part of the stalk that links CF(0) to CF(1). It either transmits conformational changes from CF(0) to CF(1) or is implicated in proton conduction. The chain is ATP synthase subunit delta, sodium ion specific from Propionigenium modestum.